A 183-amino-acid polypeptide reads, in one-letter code: ATP synthase subunit b, chloroplastic (183 aa).

A helical transmembrane segment spans residues 27-49 (LATNPINLSVVLGVLIFFGKGVL).

Belongs to the ATPase B chain family. As to quaternary structure, F-type ATPases have 2 components, F(1) - the catalytic core - and F(0) - the membrane proton channel. F(1) has five subunits: alpha(3), beta(3), gamma(1), delta(1), epsilon(1). F(0) has four main subunits: a(1), b(1), b'(1) and c(10-14). The alpha and beta chains form an alternating ring which encloses part of the gamma chain. F(1) is attached to F(0) by a central stalk formed by the gamma and epsilon chains, while a peripheral stalk is formed by the delta, b and b' chains.

The protein resides in the plastid. It is found in the chloroplast thylakoid membrane. Functionally, f(1)F(0) ATP synthase produces ATP from ADP in the presence of a proton or sodium gradient. F-type ATPases consist of two structural domains, F(1) containing the extramembraneous catalytic core and F(0) containing the membrane proton channel, linked together by a central stalk and a peripheral stalk. During catalysis, ATP synthesis in the catalytic domain of F(1) is coupled via a rotary mechanism of the central stalk subunits to proton translocation. Component of the F(0) channel, it forms part of the peripheral stalk, linking F(1) to F(0). The sequence is that of ATP synthase subunit b, chloroplastic from Ranunculus macranthus (Large buttercup).